The primary structure comprises 466 residues: Asparagine--tRNA ligase (466 aa).

Belongs to the class-II aminoacyl-tRNA synthetase family. In terms of assembly, homodimer.

It is found in the cytoplasm. The catalysed reaction is tRNA(Asn) + L-asparagine + ATP = L-asparaginyl-tRNA(Asn) + AMP + diphosphate + H(+). This Buchnera aphidicola subsp. Baizongia pistaciae (strain Bp) protein is Asparagine--tRNA ligase.